Reading from the N-terminus, the 302-residue chain is Glycine--tRNA ligase alpha subunit (302 aa).

This sequence belongs to the class-II aminoacyl-tRNA synthetase family. Tetramer of two alpha and two beta subunits.

Its subcellular location is the cytoplasm. It carries out the reaction tRNA(Gly) + glycine + ATP = glycyl-tRNA(Gly) + AMP + diphosphate. This Enterococcus faecalis (strain ATCC 700802 / V583) protein is Glycine--tRNA ligase alpha subunit.